The chain runs to 448 residues: Methionine aminopeptidase 2 (448 aa).

Over residues Met-1–Ala-17 the composition is skewed to low complexity. A disordered region spans residues Met-1 to Thr-87. Residues Lys-21 to Gly-34 show a composition bias toward basic and acidic residues. Residues Pro-35–Thr-46 are compositionally biased toward acidic residues. Residues Lys-55–Thr-71 show a composition bias toward basic residues. His-200 serves as a coordination point for substrate. The a divalent metal cation site is built by Asp-220, Asp-231, and His-300. His-308 serves as a coordination point for substrate. A divalent metal cation-binding residues include Glu-334 and Glu-429.

It belongs to the peptidase M24A family. Methionine aminopeptidase eukaryotic type 2 subfamily. Co(2+) serves as cofactor. Requires Zn(2+) as cofactor. The cofactor is Mn(2+). Fe(2+) is required as a cofactor.

The protein resides in the cytoplasm. It catalyses the reaction Release of N-terminal amino acids, preferentially methionine, from peptides and arylamides.. Its function is as follows. Cotranslationally removes the N-terminal methionine from nascent proteins. The N-terminal methionine is often cleaved when the second residue in the primary sequence is small and uncharged (Met-Ala-, Cys, Gly, Pro, Ser, Thr, or Val). This is Methionine aminopeptidase 2 from Malassezia globosa (strain ATCC MYA-4612 / CBS 7966) (Dandruff-associated fungus).